The primary structure comprises 108 residues: Pyrimidine/purine nucleoside phosphorylase (108 aa).

Belongs to the nucleoside phosphorylase PpnP family.

It catalyses the reaction a purine D-ribonucleoside + phosphate = a purine nucleobase + alpha-D-ribose 1-phosphate. The enzyme catalyses adenosine + phosphate = alpha-D-ribose 1-phosphate + adenine. The catalysed reaction is cytidine + phosphate = cytosine + alpha-D-ribose 1-phosphate. It carries out the reaction guanosine + phosphate = alpha-D-ribose 1-phosphate + guanine. It catalyses the reaction inosine + phosphate = alpha-D-ribose 1-phosphate + hypoxanthine. The enzyme catalyses thymidine + phosphate = 2-deoxy-alpha-D-ribose 1-phosphate + thymine. The catalysed reaction is uridine + phosphate = alpha-D-ribose 1-phosphate + uracil. It carries out the reaction xanthosine + phosphate = alpha-D-ribose 1-phosphate + xanthine. In terms of biological role, catalyzes the phosphorolysis of diverse nucleosides, yielding D-ribose 1-phosphate and the respective free bases. Can use uridine, adenosine, guanosine, cytidine, thymidine, inosine and xanthosine as substrates. Also catalyzes the reverse reactions. The sequence is that of Pyrimidine/purine nucleoside phosphorylase from Acinetobacter baumannii (strain AB307-0294).